Consider the following 419-residue polypeptide: 2-amino-3-ketobutyrate coenzyme A ligase, mitochondrial (419 aa).

A mitochondrion-targeting transit peptide spans 1 to 21; the sequence is MWAGRVLHAALSRAPRESRAQ. K45 carries the N6-acetyllysine; alternate modification. An N6-succinyllysine; alternate modification is found at K45. 134-135 is a binding site for pyridoxal 5'-phosphate; the sequence is CF. A substrate-binding site is contributed by H159. The residue at position 187 (K187) is an N6-acetyllysine; alternate. K187 is subject to N6-succinyllysine; alternate. Pyridoxal 5'-phosphate contacts are provided by residues S206, 231-234, 262-265, and 295-296; these read DESH, TLGK, and SN. An N6-(pyridoxal phosphate)lysine modification is found at K265. 2 positions are modified to N6-succinyllysine: K326 and K368. K383 bears the N6-acetyllysine; alternate mark. The residue at position 383 (K383) is an N6-succinyllysine; alternate. R389 is a binding site for substrate.

It belongs to the class-II pyridoxal-phosphate-dependent aminotransferase family. Requires pyridoxal 5'-phosphate as cofactor.

Its subcellular location is the mitochondrion. The protein localises to the nucleus. The enzyme catalyses glycine + acetyl-CoA = (2S)-2-amino-3-oxobutanoate + CoA. Its pathway is amino-acid degradation; L-threonine degradation via oxydo-reductase pathway; glycine from L-threonine: step 2/2. In terms of biological role, pyridoxal phosphate (PLP) dependent enzyme, which catalyzes the cleavage of 2-amino-3-oxobutanoate to glycine and acetyl-CoA. Catalyzes the second reaction step on the main metabolic degradation pathway for L-threonine. This Bos taurus (Bovine) protein is 2-amino-3-ketobutyrate coenzyme A ligase, mitochondrial (GCAT).